Consider the following 319-residue polypeptide: Ornithine carbamoyltransferase (319 aa).

Residues 55 to 58, Gln-82, Arg-106, and 133 to 136 each bind carbamoyl phosphate; these read STRT and HPCQ. L-ornithine is bound by residues Asn-171, Asp-234, and 238 to 239; that span reads SM. Carbamoyl phosphate is bound by residues 274–275 and Arg-302; that span reads CL.

This sequence belongs to the aspartate/ornithine carbamoyltransferase superfamily. OTCase family.

Its subcellular location is the cytoplasm. It carries out the reaction carbamoyl phosphate + L-ornithine = L-citrulline + phosphate + H(+). It functions in the pathway amino-acid biosynthesis; L-arginine biosynthesis; L-arginine from L-ornithine and carbamoyl phosphate: step 1/3. Functionally, reversibly catalyzes the transfer of the carbamoyl group from carbamoyl phosphate (CP) to the N(epsilon) atom of ornithine (ORN) to produce L-citrulline. The sequence is that of Ornithine carbamoyltransferase (argF) from Corynebacterium glutamicum (strain ATCC 13032 / DSM 20300 / JCM 1318 / BCRC 11384 / CCUG 27702 / LMG 3730 / NBRC 12168 / NCIMB 10025 / NRRL B-2784 / 534).